The primary structure comprises 355 residues: dTDP-D-glucose 4,6-dehydratase (355 aa).

A substrate-binding site is contributed by Thr142. The active-site Proton donor is Asp143. Catalysis depends on proton acceptor residues Glu144 and Tyr166.

The protein belongs to the NAD(P)-dependent epimerase/dehydratase family. dTDP-glucose dehydratase subfamily. It depends on NAD(+) as a cofactor.

The catalysed reaction is dTDP-alpha-D-glucose = dTDP-4-dehydro-6-deoxy-alpha-D-glucose + H2O. This is dTDP-D-glucose 4,6-dehydratase (Tgds) from Mus musculus (Mouse).